A 780-amino-acid chain; its full sequence is Aconitate hydratase, mitochondrial (780 aa).

The transit peptide at Met-1–Cys-27 directs the protein to the mitochondrion. Lys-31 carries the N6-succinyllysine modification. The residue at position 50 (Lys-50) is an N6-acetyllysine; alternate. At Lys-50 the chain carries N6-succinyllysine; alternate. Gln-99 provides a ligand contact to substrate. An N6-acetyllysine; alternate mark is found at Lys-138 and Lys-144. 2 positions are modified to N6-succinyllysine; alternate: Lys-138 and Lys-144. Position 192–194 (Asp-192–His-194) interacts with substrate. Lys-233 is subject to N6-acetyllysine; alternate. Position 233 is an N6-succinyllysine; alternate (Lys-233). Position 385 (Cys-385) interacts with [4Fe-4S] cluster. Residue Lys-411 is modified to N6-succinyllysine. [4Fe-4S] cluster contacts are provided by Cys-448 and Cys-451. 2 residues coordinate substrate: Arg-474 and Arg-479. Residues Asp-528–Phe-537 are compositionally biased toward basic and acidic residues. Positions Asp-528–Pro-560 are disordered. Lys-549 bears the N6-succinyllysine mark. A compositionally biased stretch (polar residues) spans Ser-551–Pro-560. Ser-559 bears the Phosphoserine mark. Lys-573 is subject to N6-acetyllysine; alternate. Lys-573 is subject to N6-succinyllysine; alternate. Residues Lys-577 and Lys-591 each carry the N6-succinyllysine modification. N6-acetyllysine; alternate is present on Lys-605. At Lys-605 the chain carries N6-succinyllysine; alternate. Position 607 (Arg-607) interacts with substrate. Lys-628 carries the N6-succinyllysine modification. Ser-670 carries the phosphoserine modification. Ser-670–Arg-671 contacts substrate. Lys-689 is subject to N6-succinyllysine. N6-acetyllysine; alternate occurs at positions 723 and 730. 2 positions are modified to N6-succinyllysine; alternate: Lys-723 and Lys-730. An N6-acetyllysine mark is found at Lys-736, Lys-739, and Lys-743.

The protein belongs to the aconitase/IPM isomerase family. Monomer. [4Fe-4S] cluster is required as a cofactor. In terms of processing, forms covalent cross-links mediated by transglutaminase TGM2, between a glutamine and the epsilon-amino group of a lysine residue, forming homopolymers and heteropolymers.

Its subcellular location is the mitochondrion. The catalysed reaction is citrate = D-threo-isocitrate. It functions in the pathway carbohydrate metabolism; tricarboxylic acid cycle; isocitrate from oxaloacetate: step 2/2. Catalyzes the isomerization of citrate to isocitrate via cis-aconitate. The protein is Aconitate hydratase, mitochondrial (ACO2) of Homo sapiens (Human).